The chain runs to 132 residues: Large ribosomal subunit protein uL22 (132 aa).

Belongs to the universal ribosomal protein uL22 family. As to quaternary structure, part of the 50S ribosomal subunit.

In terms of biological role, this protein binds specifically to 23S rRNA; its binding is stimulated by other ribosomal proteins, e.g. L4, L17, and L20. It is important during the early stages of 50S assembly. It makes multiple contacts with different domains of the 23S rRNA in the assembled 50S subunit and ribosome. The globular domain of the protein is located near the polypeptide exit tunnel on the outside of the subunit, while an extended beta-hairpin is found that lines the wall of the exit tunnel in the center of the 70S ribosome. The sequence is that of Large ribosomal subunit protein uL22 from Rhodospirillum centenum (strain ATCC 51521 / SW).